Here is a 453-residue protein sequence, read N- to C-terminus: ATP-dependent RNA helicase dbp8 (453 aa).

Positions 7–35 match the Q motif motif; sequence KSFSDLGISPWLIDTLKALAIYEPTDIQE. One can recognise a Helicase ATP-binding domain in the interval 38–214; the sequence is IAQILEGRNC…YQPQKNNKPP (177 aa). 51 to 58 serves as a coordination point for ATP; it reads AKTGSGKT. The DEAD box signature appears at 160–163; that stretch reads DEAD. The Helicase C-terminal domain occupies 230 to 393; sequence TLQQSYIFVS…YEHVSENKML (164 aa). Positions 413 to 453 are disordered; the sequence is RGFGERRQKRNEKRLMANGISNKLKNSGRKKKAKNTLSTEK.

This sequence belongs to the DEAD box helicase family. DDX49/DBP8 subfamily.

It is found in the nucleus. It localises to the nucleolus. It catalyses the reaction ATP + H2O = ADP + phosphate + H(+). In terms of biological role, ATP-binding RNA helicase involved in 40S ribosomal subunit biogenesis and is required for the normal formation of 18S rRNAs through pre-rRNA processing at A0, A1 and A2 sites. Required for vegetative growth. The polypeptide is ATP-dependent RNA helicase dbp8 (dbp8) (Schizosaccharomyces pombe (strain 972 / ATCC 24843) (Fission yeast)).